The primary structure comprises 176 residues: N5-carboxyaminoimidazole ribonucleotide mutase (176 aa).

Substrate contacts are provided by serine 14, aspartate 17, and arginine 44.

The protein belongs to the AIR carboxylase family. Class I subfamily.

The catalysed reaction is 5-carboxyamino-1-(5-phospho-D-ribosyl)imidazole + H(+) = 5-amino-1-(5-phospho-D-ribosyl)imidazole-4-carboxylate. The protein operates within purine metabolism; IMP biosynthesis via de novo pathway; 5-amino-1-(5-phospho-D-ribosyl)imidazole-4-carboxylate from 5-amino-1-(5-phospho-D-ribosyl)imidazole (N5-CAIR route): step 2/2. Functionally, catalyzes the conversion of N5-carboxyaminoimidazole ribonucleotide (N5-CAIR) to 4-carboxy-5-aminoimidazole ribonucleotide (CAIR). This Synechocystis sp. (strain ATCC 27184 / PCC 6803 / Kazusa) protein is N5-carboxyaminoimidazole ribonucleotide mutase.